The sequence spans 62 residues: Pelophylaxin-4 (62 aa).

A signal peptide spans 1-22 (MLTLKKSMLLIFFLGTINFSLC). A propeptide spanning residues 23 to 45 (EQERNADEEERRDEPEERDVEVQ) is cleaved from the precursor. A Leucine amide modification is found at Leu60. Residue Gly61 is a propeptide.

As to expression, expressed by the skin glands.

It localises to the secreted. In terms of biological role, antimicrobial peptide. This chain is Pelophylaxin-4, found in Pelophylax fukienensis (Fukien gold-striped pond frog).